Here is a 192-residue protein sequence, read N- to C-terminus: GTP cyclohydrolase-2 (192 aa).

GTP is bound at residue Arg50–Glu54. Cys55, Cys66, and Cys68 together coordinate Zn(2+). Residues Glu92–Arg94 and Thr114 contribute to the GTP site. The active-site Proton acceptor is the Asp126. The active-site Nucleophile is Arg128. Residues Thr149 and Lys154 each contribute to the GTP site.

This sequence belongs to the GTP cyclohydrolase II family. The cofactor is Zn(2+).

It carries out the reaction GTP + 4 H2O = 2,5-diamino-6-hydroxy-4-(5-phosphoribosylamino)-pyrimidine + formate + 2 phosphate + 3 H(+). It functions in the pathway cofactor biosynthesis; riboflavin biosynthesis; 5-amino-6-(D-ribitylamino)uracil from GTP: step 1/4. Functionally, catalyzes the conversion of GTP to 2,5-diamino-6-ribosylamino-4(3H)-pyrimidinone 5'-phosphate (DARP), formate and pyrophosphate. In Helicobacter acinonychis (strain Sheeba), this protein is GTP cyclohydrolase-2.